The primary structure comprises 1240 residues: DNA polymerase catalytic subunit (1240 aa).

Positions 1 to 26 (MFCAAGGPASPGGKSAARAASGFFAP) are enriched in low complexity. Disordered stretches follow at residues 1–65 (MFCA…PAQR), 646–695 (GLDK…RETG), and 1103–1139 (AAAP…ASKP). The span at 44 to 56 (NFYNPHLAQTGTQ) shows a compositional bias: polar residues. Over residues 669–688 (NGDEDKDDDEDGDEDGDERE) the composition is skewed to acidic residues.

This sequence belongs to the DNA polymerase type-B family. As to quaternary structure, forms a complex with the ssDNA-binding protein UL29, the DNA polymerase processivity factor, and the alkaline exonuclease. Interacts with the putative helicase-primase complex subunit UL8; this interaction may coordinate leading and lagging strand DNA synthesis at the replication fork.

It localises to the host nucleus. It catalyses the reaction DNA(n) + a 2'-deoxyribonucleoside 5'-triphosphate = DNA(n+1) + diphosphate. The catalysed reaction is Endonucleolytic cleavage to 5'-phosphomonoester.. Functionally, replicates viral genomic DNA. The replication complex is composed of six viral proteins: the DNA polymerase, processivity factor, primase, primase-associated factor, helicase, and ssDNA-binding protein. Additionally, the polymerase contains an intrinsic ribonuclease H (RNase H) activity that specifically degrades RNA/DNA heteroduplexes or duplex DNA substrates in the 5' to 3' direction. Therefore, it can catalyze the excision of the RNA primers that initiate the synthesis of Okazaki fragments at a replication fork during viral DNA replication. The protein is DNA polymerase catalytic subunit of Human herpesvirus 2 (strain 186) (HHV-2).